The following is a 444-amino-acid chain: Argininosuccinate synthase (444 aa).

ATP-binding positions include 17 to 25 and A43; that span reads AFSGGLDTS. Y99 lines the L-citrulline pocket. Residues G129 and T131 each contribute to the ATP site. L-aspartate-binding residues include T131, N135, and D136. L-citrulline is bound at residue N135. Residue D136 participates in ATP binding. The L-citrulline site is built by R139 and S192. Position 194 (D194) interacts with ATP. L-citrulline is bound by residues T201, E203, and E280.

The protein belongs to the argininosuccinate synthase family. Type 2 subfamily. Homotetramer.

The protein localises to the cytoplasm. It carries out the reaction L-citrulline + L-aspartate + ATP = 2-(N(omega)-L-arginino)succinate + AMP + diphosphate + H(+). Its pathway is amino-acid biosynthesis; L-arginine biosynthesis; L-arginine from L-ornithine and carbamoyl phosphate: step 2/3. This chain is Argininosuccinate synthase, found in Paraburkholderia phymatum (strain DSM 17167 / CIP 108236 / LMG 21445 / STM815) (Burkholderia phymatum).